Reading from the N-terminus, the 693-residue chain is DNA ligase (693 aa).

NAD(+) is bound by residues 43–47, 92–93, and glutamate 123; these read DEEYD and SL. The N6-AMP-lysine intermediate role is filled by lysine 125. NAD(+) contacts are provided by arginine 146, glutamate 180, lysine 296, and lysine 320. Zn(2+)-binding residues include cysteine 414, cysteine 417, cysteine 433, and cysteine 438. One can recognise a BRCT domain in the interval 595–684; it reads VKYDVLKGLT…AKLKGYNFDE (90 aa).

It belongs to the NAD-dependent DNA ligase family. LigA subfamily. Mg(2+) serves as cofactor. Requires Mn(2+) as cofactor.

The enzyme catalyses NAD(+) + (deoxyribonucleotide)n-3'-hydroxyl + 5'-phospho-(deoxyribonucleotide)m = (deoxyribonucleotide)n+m + AMP + beta-nicotinamide D-nucleotide.. In terms of biological role, DNA ligase that catalyzes the formation of phosphodiester linkages between 5'-phosphoryl and 3'-hydroxyl groups in double-stranded DNA using NAD as a coenzyme and as the energy source for the reaction. It is essential for DNA replication and repair of damaged DNA. This Thermotoga neapolitana (strain ATCC 49049 / DSM 4359 / NBRC 107923 / NS-E) protein is DNA ligase.